The primary structure comprises 298 residues: Ribosomal RNA small subunit methyltransferase A (298 aa).

S-adenosyl-L-methionine contacts are provided by N35, L37, G62, E83, D108, and N133.

Belongs to the class I-like SAM-binding methyltransferase superfamily. rRNA adenine N(6)-methyltransferase family. RsmA subfamily.

It is found in the cytoplasm. The enzyme catalyses adenosine(1518)/adenosine(1519) in 16S rRNA + 4 S-adenosyl-L-methionine = N(6)-dimethyladenosine(1518)/N(6)-dimethyladenosine(1519) in 16S rRNA + 4 S-adenosyl-L-homocysteine + 4 H(+). In terms of biological role, specifically dimethylates two adjacent adenosines (A1518 and A1519) in the loop of a conserved hairpin near the 3'-end of 16S rRNA in the 30S particle. May play a critical role in biogenesis of 30S subunits. This Streptococcus pyogenes serotype M12 (strain MGAS9429) protein is Ribosomal RNA small subunit methyltransferase A.